Consider the following 524-residue polypeptide: Nuclear distribution protein PAC1 (524 aa).

Positions 65–90 (STVLRLQRKIIDLENEVGTLRSIVDG) form a coiled coil. WD repeat units lie at residues 121-160 (QQNQ…TSIP), 166-217 (AHTR…HIRT), 220-262 (GHDH…KSFT), 277-317 (NSQL…GLAL), 353-394 (IPQE…LIPH), 415-454 (GHQS…VTGS), 463-492 (GHDG…DATE), and 493-524 (EESH…KLWS).

This sequence belongs to the WD repeat LIS1/nudF family. In terms of assembly, self-associates. Interacts with NDL1 and dynein.

Its subcellular location is the cytoplasm. The protein localises to the cytoskeleton. The protein resides in the spindle pole. Functionally, positively regulates the activity of the minus-end directed microtubule motor protein dynein. Plays a central role in positioning the mitotic spindle at the bud neck during cell division. Targets cytoplasmic dynein to microtubule plus ends, thereby promoting dynein-mediated microtubule sliding along the bud cortex and consequently the movement of the mitotic spindle to the bud neck. This Scheffersomyces stipitis (strain ATCC 58785 / CBS 6054 / NBRC 10063 / NRRL Y-11545) (Yeast) protein is Nuclear distribution protein PAC1.